A 264-amino-acid polypeptide reads, in one-letter code: S-adenosylmethionine decarboxylase proenzyme (264 aa).

The active-site Schiff-base intermediate with substrate; via pyruvic acid is Ser112. Ser112 is subject to Pyruvic acid (Ser); by autocatalysis. His117 (proton acceptor; for processing activity) is an active-site residue. Cys140 serves as the catalytic Proton donor; for catalytic activity.

It belongs to the prokaryotic AdoMetDC family. Type 2 subfamily. In terms of assembly, heterooctamer of four alpha and four beta chains arranged as a tetramer of alpha/beta heterodimers. The cofactor is pyruvate. Post-translationally, is synthesized initially as an inactive proenzyme. Formation of the active enzyme involves a self-maturation process in which the active site pyruvoyl group is generated from an internal serine residue via an autocatalytic post-translational modification. Two non-identical subunits are generated from the proenzyme in this reaction, and the pyruvate is formed at the N-terminus of the alpha chain, which is derived from the carboxyl end of the proenzyme. The post-translation cleavage follows an unusual pathway, termed non-hydrolytic serinolysis, in which the side chain hydroxyl group of the serine supplies its oxygen atom to form the C-terminus of the beta chain, while the remainder of the serine residue undergoes an oxidative deamination to produce ammonia and the pyruvoyl group blocking the N-terminus of the alpha chain.

The catalysed reaction is S-adenosyl-L-methionine + H(+) = S-adenosyl 3-(methylsulfanyl)propylamine + CO2. The protein operates within amine and polyamine biosynthesis; S-adenosylmethioninamine biosynthesis; S-adenosylmethioninamine from S-adenosyl-L-methionine: step 1/1. In terms of biological role, catalyzes the decarboxylation of S-adenosylmethionine to S-adenosylmethioninamine (dcAdoMet), the propylamine donor required for the synthesis of the polyamines spermine and spermidine from the diamine putrescine. The protein is S-adenosylmethionine decarboxylase proenzyme of Enterobacter sp. (strain 638).